We begin with the raw amino-acid sequence, 254 residues long: 3-dehydroquinate dehydratase (254 aa).

Residues 47 to 49 (EFR) and Arg83 each bind 3-dehydroquinate. The active-site Proton donor/acceptor is the His144. The active-site Schiff-base intermediate with substrate is Lys171. Residues Arg213, Ser232, and Gln236 each coordinate 3-dehydroquinate.

Belongs to the type-I 3-dehydroquinase family. Homodimer.

The catalysed reaction is 3-dehydroquinate = 3-dehydroshikimate + H2O. It functions in the pathway metabolic intermediate biosynthesis; chorismate biosynthesis; chorismate from D-erythrose 4-phosphate and phosphoenolpyruvate: step 3/7. In terms of biological role, involved in the third step of the chorismate pathway, which leads to the biosynthesis of aromatic amino acids. Catalyzes the cis-dehydration of 3-dehydroquinate (DHQ) and introduces the first double bond of the aromatic ring to yield 3-dehydroshikimate. This chain is 3-dehydroquinate dehydratase, found in Neisseria meningitidis serogroup B (strain ATCC BAA-335 / MC58).